The primary structure comprises 494 residues: Lysine--tRNA ligase (494 aa).

Residues Glu-405 and Glu-412 each coordinate Mg(2+).

The protein belongs to the class-II aminoacyl-tRNA synthetase family. In terms of assembly, homodimer. It depends on Mg(2+) as a cofactor.

It is found in the cytoplasm. The catalysed reaction is tRNA(Lys) + L-lysine + ATP = L-lysyl-tRNA(Lys) + AMP + diphosphate. The polypeptide is Lysine--tRNA ligase (lysS) (Geobacillus stearothermophilus (Bacillus stearothermophilus)).